The following is a 101-amino-acid chain: Small ribosomal subunit protein uS14 (101 aa).

The protein belongs to the universal ribosomal protein uS14 family. In terms of assembly, part of the 30S ribosomal subunit. Contacts proteins S3 and S10.

Its function is as follows. Binds 16S rRNA, required for the assembly of 30S particles and may also be responsible for determining the conformation of the 16S rRNA at the A site. This Saccharophagus degradans (strain 2-40 / ATCC 43961 / DSM 17024) protein is Small ribosomal subunit protein uS14.